The sequence spans 206 residues: Isopentenyl-diphosphate Delta-isomerase (206 aa).

H44 and H51 together coordinate Mn(2+). In terms of domain architecture, Nudix hydrolase spans 49–183 (ALHLAFSCHV…PWAFSPWLVL (135 aa)). C86 is a catalytic residue. C86 serves as a coordination point for Mg(2+). H88 is a binding site for Mn(2+). E106 is a binding site for Mg(2+). E133 and E135 together coordinate Mn(2+). The active site involves E135.

It belongs to the IPP isomerase type 1 family. Requires Mg(2+) as cofactor. It depends on Mn(2+) as a cofactor.

The protein resides in the cytoplasm. It catalyses the reaction isopentenyl diphosphate = dimethylallyl diphosphate. It participates in isoprenoid biosynthesis; dimethylallyl diphosphate biosynthesis; dimethylallyl diphosphate from isopentenyl diphosphate: step 1/1. Functionally, catalyzes the 1,3-allylic rearrangement of the homoallylic substrate isopentenyl (IPP) to its highly electrophilic allylic isomer, dimethylallyl diphosphate (DMAPP). The chain is Isopentenyl-diphosphate Delta-isomerase from Agromyces mediolanus (Corynebacterium mediolanum).